The sequence spans 494 residues: Acetylcholine receptor subunit epsilon (494 aa).

The N-terminal stretch at 1-20 (MTMALLGTLLLLALFGRSQG) is a signal peptide. The Extracellular segment spans residues 21 to 239 (KNEELSLYHH…VIYTLIIRRK (219 aa)). Residues asparagine 86 and asparagine 161 are each glycosylated (N-linked (GlcNAc...) asparagine). Cysteines 148 and 162 form a disulfide. The helical transmembrane segment at 240–264 (PLFYVINIIVPCVLISGLVLLAYFL) threads the bilayer. Residues 265–272 (PAQAGGQK) are Cytoplasmic-facing. The helical transmembrane segment at 273–291 (CTVSINVLLAQTVFLFLIA) threads the bilayer. Residues 292–306 (QKIPETSLSVPLLGR) are Extracellular-facing. A helical transmembrane segment spans residues 307 to 328 (YLIFVMVVATLIVMNCVIVLNV). The Cytoplasmic portion of the chain corresponds to 329-457 (SLRTPTTHAT…WVRMGKALDN (129 aa)). A helical membrane pass occupies residues 458 to 481 (VCFWAALVLFSVGSTLIFLGGYFN). Residues 482-494 (QVPDLPYPPCIQP) are Extracellular-facing.

Belongs to the ligand-gated ion channel (TC 1.A.9) family. Acetylcholine receptor (TC 1.A.9.1) subfamily. Epsilon/CHRNE sub-subfamily. In terms of assembly, pentamer of two alpha chains, and one each of the beta, delta, and gamma (in immature muscle) or epsilon (in mature muscle) chains. The muscle heteropentamer composed of alpha-1, beta-1, delta, epsilon subunits interacts with the alpha-conotoxin ImII.

The protein localises to the postsynaptic cell membrane. It is found in the cell membrane. It carries out the reaction K(+)(in) = K(+)(out). It catalyses the reaction Na(+)(in) = Na(+)(out). In terms of biological role, after binding acetylcholine, the AChR responds by an extensive change in conformation that affects all subunits and leads to opening of an ion-conducting channel across the plasma membrane. In Rattus norvegicus (Rat), this protein is Acetylcholine receptor subunit epsilon (Chrne).